The sequence spans 214 residues: Ribonuclease P protein component 3 (214 aa).

Belongs to the eukaryotic/archaeal RNase P protein component 3 family. In terms of assembly, consists of a catalytic RNA component and at least 4-5 protein subunits.

It is found in the cytoplasm. The enzyme catalyses Endonucleolytic cleavage of RNA, removing 5'-extranucleotides from tRNA precursor.. Part of ribonuclease P, a protein complex that generates mature tRNA molecules by cleaving their 5'-ends. The polypeptide is Ribonuclease P protein component 3 (Thermococcus gammatolerans (strain DSM 15229 / JCM 11827 / EJ3)).